Here is a 379-residue protein sequence, read N- to C-terminus: Thiosulfate/3-mercaptopyruvate sulfurtransferase 1, mitochondrial (379 aa).

The N-terminal 56 residues, 1 to 56, are a transit peptide targeting the mitochondrion; that stretch reads MASTLFSRTFLAASHRLITPSLPQKIFNPATFLSRSLHSQLGSASTAYKSTTWARR. N-acetylalanine is present on Ala57. 2 consecutive Rhodanese domains span residues 91–208 and 259–373; these read REPD…DVES and EDPT…LPIE. Cys333 serves as the catalytic Cysteine persulfide intermediate.

As to expression, expressed in roots, rosette and cauline leaves, stems, flowers and siliques.

It is found in the mitochondrion. The catalysed reaction is thiosulfate + hydrogen cyanide = thiocyanate + sulfite + 2 H(+). The enzyme catalyses 2-oxo-3-sulfanylpropanoate + [thioredoxin]-dithiol = [thioredoxin]-disulfide + hydrogen sulfide + pyruvate + H(+). Its function is as follows. Catalyzes the transfer of a sulfur ion from a donor to cyanide or to other thiol compounds. Substrate preference is 3-mercaptopyruvate &gt; thiosulfate. Involved in embryo and seed development. In Arabidopsis thaliana (Mouse-ear cress), this protein is Thiosulfate/3-mercaptopyruvate sulfurtransferase 1, mitochondrial (STR1).